Here is a 396-residue protein sequence, read N- to C-terminus: Phosphoglycerate kinase (396 aa).

Residues D21–N23, R36, H59–K62, R119, and R156 each bind substrate. Residues K206, G294, E325, and G352–S355 contribute to the ATP site.

This sequence belongs to the phosphoglycerate kinase family. In terms of assembly, monomer.

It is found in the cytoplasm. It carries out the reaction (2R)-3-phosphoglycerate + ATP = (2R)-3-phospho-glyceroyl phosphate + ADP. The protein operates within carbohydrate degradation; glycolysis; pyruvate from D-glyceraldehyde 3-phosphate: step 2/5. The protein is Phosphoglycerate kinase of Listeria monocytogenes serotype 4b (strain CLIP80459).